The chain runs to 467 residues: Asparagine--tRNA ligase (467 aa).

It belongs to the class-II aminoacyl-tRNA synthetase family. Homodimer.

The protein localises to the cytoplasm. It carries out the reaction tRNA(Asn) + L-asparagine + ATP = L-asparaginyl-tRNA(Asn) + AMP + diphosphate + H(+). The sequence is that of Asparagine--tRNA ligase from Actinobacillus pleuropneumoniae serotype 5b (strain L20).